The following is a 2051-amino-acid chain: Autophagy-related protein 2 (2051 aa).

One can recognise a Chorein N-terminal domain in the interval 31–121 (QALDLDNLNF…QDEQTAKNKK (91 aa)). A compositionally biased stretch (basic and acidic residues) spans 108–117 (SKQEQDEQTA). Disordered regions lie at residues 108–129 (SKQEQDEQTAKNKKGTHKDGDE), 152–179 (RRLEKALAEEAQEALSESMSDSETDDDG), 297–331 (SLVKPQGPAPHDVPSTLRDMSGSMQSSVGGLDMSI), 363–384 (DTQYPEAEENVAGSSPLSTPRA), 419–466 (RSEP…ADTE), and 501–564 (PGGW…DTST). Polar residues-rich tracts occupy residues 374-383 (AGSSPLSTPR) and 426-435 (PPTSFQPQTM). Over residues 436–454 (PSGAVSPAPSEPSSSASSV) the composition is skewed to low complexity.

It belongs to the ATG2 family.

Its subcellular location is the preautophagosomal structure membrane. It is found in the endoplasmic reticulum membrane. The catalysed reaction is a 1,2-diacyl-sn-glycero-3-phosphocholine(in) = a 1,2-diacyl-sn-glycero-3-phosphocholine(out). The enzyme catalyses a 1,2-diacyl-sn-glycero-3-phospho-L-serine(in) = a 1,2-diacyl-sn-glycero-3-phospho-L-serine(out). It catalyses the reaction a 1,2-diacyl-sn-glycero-3-phosphoethanolamine(in) = a 1,2-diacyl-sn-glycero-3-phosphoethanolamine(out). Its function is as follows. Lipid transfer protein required for autophagosome completion and peroxisome degradation. Tethers the edge of the isolation membrane (IM) to the endoplasmic reticulum (ER) and mediates direct lipid transfer from ER to IM for IM expansion. Atg-2 binds to the ER exit site (ERES), which is the membrane source for autophagosome formation, using basic residues in its N-terminal region (NR) and to the expanding edge of the IM through its C-terminal region. The latter binding is assisted by an atg-18-PtdIns3P interaction. Atg-2 then extracts phospholipids from the membrane source using its NR and transfers them to atg-9 to the IM through its predicted beta-sheet-rich structure for membrane expansion. In Neurospora crassa (strain ATCC 24698 / 74-OR23-1A / CBS 708.71 / DSM 1257 / FGSC 987), this protein is Autophagy-related protein 2 (apg-2).